A 607-amino-acid polypeptide reads, in one-letter code: Actin-related protein 5 (607 aa).

Lys-283 is covalently cross-linked (Glycyl lysine isopeptide (Lys-Gly) (interchain with G-Cter in SUMO2)). 2 coiled-coil regions span residues Thr-288–Leu-327 and Glu-355–Val-384. Positions Ser-584–Ser-596 are enriched in low complexity. Positions Ser-584 to Ala-607 are disordered. A compositionally biased stretch (gly residues) spans Ala-597–Ala-607.

It belongs to the actin family. ARP5 subfamily. As to quaternary structure, component of the chromatin remodeling INO80 complex; specifically part of a complex module associated with the helicase ATP-binding and the helicase C-terminal domain of INO80. Interacts with DDB1. Interacts with ACTR8; the interaction is observed in asynchronous (interphase) cells but not in metaphase-arrested cells indicative for a possible dissociation of the INO80 complex in mitotic cells.

It localises to the nucleus. It is found in the cytoplasm. In terms of biological role, proposed core component of the chromatin remodeling INO80 complex which is involved in transcriptional regulation, DNA replication and probably DNA repair. Involved in DNA double-strand break repair and UV-damage excision repair. The chain is Actin-related protein 5 (ACTR5) from Homo sapiens (Human).